The following is a 418-amino-acid chain: Tyrosine--tRNA ligase (418 aa).

L-tyrosine is bound at residue Y39. A 'HIGH' region motif is present at residues 44–53 (CTAASLHVGH). L-tyrosine-binding residues include Y176 and Q180. Residues 236 to 240 (KMGKT) carry the 'KMSKS' region motif. K239 provides a ligand contact to ATP. The region spanning 350–418 (IGVLVAFAEK…KKKHVLLRLA (69 aa)) is the S4 RNA-binding domain.

The protein belongs to the class-I aminoacyl-tRNA synthetase family. TyrS type 1 subfamily. Homodimer.

Its subcellular location is the cytoplasm. It catalyses the reaction tRNA(Tyr) + L-tyrosine + ATP = L-tyrosyl-tRNA(Tyr) + AMP + diphosphate + H(+). In terms of biological role, catalyzes the attachment of tyrosine to tRNA(Tyr) in a two-step reaction: tyrosine is first activated by ATP to form Tyr-AMP and then transferred to the acceptor end of tRNA(Tyr). The chain is Tyrosine--tRNA ligase from Rhodopseudomonas palustris (strain ATCC BAA-98 / CGA009).